Here is a 414-residue protein sequence, read N- to C-terminus: MSATVIREDGAYHSFCGLTCVGWLYQKIKDSFFLVLGTHTCAHLLQNVLGVMVFARPRFGVALIEEADLSKQQPELNAIIDEIVADHHPSVIFLLSSCTPEVMKVEFDGLARAVSRPNLPVLFVPASGLDYTFSQAEDSVLQALLPFCPVAPADDRRVVFLGSVNDAIADDFHTEAARLGIPVAGFLPESHFRDLPPIGPGTVVAPLQPYLAKVAGRLARERGATVMTSLFPFGPDGTRAFWEDLAAAMGKAVDLSERERQAWERLEPHLEILRGKKVFFTADNLMELPLARFLRNAGCIILECSSPYINRKFHARELAALDGVRVVEQPNFDRQLRDIRALRPDLVISTLATTNPLVGHGVVAKWSTEFSFMPIQGWSGAATLAGMFTRPLKRHAQLDPLMDDPLWVAGLMPG.

The [4Fe-4S] cluster site is built by cysteine 16, cysteine 41, and cysteine 98.

Belongs to the BchN/ChlN family. In terms of assembly, protochlorophyllide reductase is composed of three subunits; BchL, BchN and BchB. Forms a heterotetramer of two BchB and two BchN subunits. [4Fe-4S] cluster is required as a cofactor.

It catalyses the reaction chlorophyllide a + oxidized 2[4Fe-4S]-[ferredoxin] + 2 ADP + 2 phosphate = protochlorophyllide a + reduced 2[4Fe-4S]-[ferredoxin] + 2 ATP + 2 H2O. It functions in the pathway porphyrin-containing compound metabolism; bacteriochlorophyll biosynthesis (light-independent). Functionally, component of the dark-operative protochlorophyllide reductase (DPOR) that uses Mg-ATP and reduced ferredoxin to reduce ring D of protochlorophyllide (Pchlide) to form chlorophyllide a (Chlide). This reaction is light-independent. The NB-protein (BchN-BchB) is the catalytic component of the complex. This chain is Light-independent protochlorophyllide reductase subunit N, found in Roseiflexus castenholzii (strain DSM 13941 / HLO8).